The sequence spans 117 residues: Hydrogenase maturation factor HypA (117 aa).

His-2 lines the Ni(2+) pocket. Zn(2+) is bound by residues Cys-73, Cys-76, Cys-89, and Cys-92.

Belongs to the HypA/HybF family.

Its function is as follows. Involved in the maturation of [NiFe] hydrogenases. Required for nickel insertion into the metal center of the hydrogenase. The protein is Hydrogenase maturation factor HypA of Shewanella baltica (strain OS185).